The following is an 81-amino-acid chain: Photosystem I iron-sulfur center (81 aa).

4Fe-4S ferredoxin-type domains follow at residues 2–31 (SHSV…MIPW) and 39–68 (IASA…VRVY). The [4Fe-4S] cluster site is built by C11, C14, C17, C21, C48, C51, C54, and C58.

As to quaternary structure, the eukaryotic PSI reaction center is composed of at least 11 subunits. Requires [4Fe-4S] cluster as cofactor.

It localises to the plastid. The protein resides in the chloroplast thylakoid membrane. The enzyme catalyses reduced [plastocyanin] + hnu + oxidized [2Fe-2S]-[ferredoxin] = oxidized [plastocyanin] + reduced [2Fe-2S]-[ferredoxin]. Its function is as follows. Apoprotein for the two 4Fe-4S centers FA and FB of photosystem I (PSI); essential for photochemical activity. FB is the terminal electron acceptor of PSI, donating electrons to ferredoxin. The C-terminus interacts with PsaA/B/D and helps assemble the protein into the PSI complex. Required for binding of PsaD and PsaE to PSI. PSI is a plastocyanin-ferredoxin oxidoreductase, converting photonic excitation into a charge separation, which transfers an electron from the donor P700 chlorophyll pair to the spectroscopically characterized acceptors A0, A1, FX, FA and FB in turn. The sequence is that of Photosystem I iron-sulfur center from Triticum aestivum (Wheat).